A 332-amino-acid polypeptide reads, in one-letter code: Transaldolase (332 aa).

Lysine 136 functions as the Schiff-base intermediate with substrate in the catalytic mechanism.

Belongs to the transaldolase family. Type 1 subfamily.

The protein resides in the cytoplasm. It catalyses the reaction D-sedoheptulose 7-phosphate + D-glyceraldehyde 3-phosphate = D-erythrose 4-phosphate + beta-D-fructose 6-phosphate. It functions in the pathway carbohydrate degradation; pentose phosphate pathway; D-glyceraldehyde 3-phosphate and beta-D-fructose 6-phosphate from D-ribose 5-phosphate and D-xylulose 5-phosphate (non-oxidative stage): step 2/3. Functionally, transaldolase is important for the balance of metabolites in the pentose-phosphate pathway. In Trichormus variabilis (strain ATCC 29413 / PCC 7937) (Anabaena variabilis), this protein is Transaldolase.